Here is a 555-residue protein sequence, read N- to C-terminus: Hdr-like menaquinol oxidoreductase iron-sulfur subunit 2 (555 aa).

2 consecutive 4Fe-4S ferredoxin-type domains span residues 82 to 111 (RSFK…GDPK) and 151 to 180 (KELY…AEIV). [4Fe-4S] cluster-binding residues include Cys-91, Cys-94, Cys-97, Cys-101, Cys-160, Cys-163, Cys-166, and Cys-170.

As to quaternary structure, consists of five subunits: an integral membrane subunit, a cytochrome b-like subunit, a cytochrome c subunit and two iron-sulfur subunits. [4Fe-4S] cluster serves as cofactor.

It localises to the cell membrane. Functionally, has menaquinol-oxidizing activity. HmeC and HmeD subunits may together mediate electron transfer from menaquinol to an unidentified electron acceptor on the cytoplasmic side of the membrane. This chain is Hdr-like menaquinol oxidoreductase iron-sulfur subunit 2 (hmeD), found in Archaeoglobus fulgidus (strain ATCC 49558 / DSM 4304 / JCM 9628 / NBRC 100126 / VC-16).